The chain runs to 157 residues: Small ribosomal subunit protein uS7 (157 aa).

The protein belongs to the universal ribosomal protein uS7 family. As to quaternary structure, part of the 30S ribosomal subunit. Contacts proteins S9 and S11.

Functionally, one of the primary rRNA binding proteins, it binds directly to 16S rRNA where it nucleates assembly of the head domain of the 30S subunit. Is located at the subunit interface close to the decoding center, probably blocks exit of the E-site tRNA. In Variovorax paradoxus (strain S110), this protein is Small ribosomal subunit protein uS7.